Here is a 202-residue protein sequence, read N- to C-terminus: GTP cyclohydrolase 1 (202 aa).

Zn(2+) is bound by residues cysteine 90, histidine 93, and cysteine 163.

This sequence belongs to the GTP cyclohydrolase I family. Homomer.

It catalyses the reaction GTP + H2O = 7,8-dihydroneopterin 3'-triphosphate + formate + H(+). Its pathway is cofactor biosynthesis; 7,8-dihydroneopterin triphosphate biosynthesis; 7,8-dihydroneopterin triphosphate from GTP: step 1/1. This Mycobacterium marinum (strain ATCC BAA-535 / M) protein is GTP cyclohydrolase 1.